The following is a 134-amino-acid chain: D-ribose pyranase (134 aa).

The active-site Proton donor is His-20. Substrate is bound by residues Asp-28, His-99, and 123–125; that span reads YSN.

This sequence belongs to the RbsD / FucU family. RbsD subfamily. In terms of assembly, homodecamer.

It localises to the cytoplasm. It catalyses the reaction beta-D-ribopyranose = beta-D-ribofuranose. Its pathway is carbohydrate metabolism; D-ribose degradation; D-ribose 5-phosphate from beta-D-ribopyranose: step 1/2. Its function is as follows. Catalyzes the interconversion of beta-pyran and beta-furan forms of D-ribose. The protein is D-ribose pyranase of Staphylococcus aureus (strain USA300).